The chain runs to 458 residues: Exodeoxyribonuclease 7 large subunit (458 aa).

Belongs to the XseA family. Heterooligomer composed of large and small subunits.

It localises to the cytoplasm. It carries out the reaction Exonucleolytic cleavage in either 5'- to 3'- or 3'- to 5'-direction to yield nucleoside 5'-phosphates.. Its function is as follows. Bidirectionally degrades single-stranded DNA into large acid-insoluble oligonucleotides, which are then degraded further into small acid-soluble oligonucleotides. This Halalkalibacterium halodurans (strain ATCC BAA-125 / DSM 18197 / FERM 7344 / JCM 9153 / C-125) (Bacillus halodurans) protein is Exodeoxyribonuclease 7 large subunit.